A 265-amino-acid chain; its full sequence is 5'-nucleotidase SurE (265 aa).

The a divalent metal cation site is built by aspartate 8, aspartate 9, serine 41, and asparagine 100.

It belongs to the SurE nucleotidase family. It depends on a divalent metal cation as a cofactor.

It is found in the cytoplasm. It carries out the reaction a ribonucleoside 5'-phosphate + H2O = a ribonucleoside + phosphate. In terms of biological role, nucleotidase that shows phosphatase activity on nucleoside 5'-monophosphates. The protein is 5'-nucleotidase SurE of Brevibacillus brevis (strain 47 / JCM 6285 / NBRC 100599).